Consider the following 94-residue polypeptide: Lipolysis-activating peptide 1-beta chain (94 aa).

Residues 1–19 (MKILAVVLISVIVLNTANG) form the signal peptide. Residues 20–87 (ENYYPQKYTN…YFNALESQCP (68 aa)) enclose the LCN-type CS-alpha/beta domain. 3 cysteine pairs are disulfide-bonded: Cys34–Cys56, Cys42–Cys66, and Cys46–Cys68.

Belongs to the long (3 C-C) scorpion toxin superfamily. In terms of assembly, homodimer; disulfide-linked or monomer (edited version) or heterodimer of an alpha chain (AC P0CI44 or AC P0CI45) and this beta chain (non-edited version). Expressed by the venom gland.

The protein resides in the secreted. In terms of biological role, the homodimer inhibits HMG-CoA reductase (HMGCR) (32% of inhibition produced by 0.6 uM), a glycoprotein involved in the control of cholesterol biosynthesis. The inhibitory effects of bumarsin are seen at much lower concentrations (0.6 uM) than that for statins such as atorvastatin (5 mM) and simvastatin (10 uM). In addition to inhibition of HMG-CoA reductase, this protein lowers cholesterol levels by inducing steroid hormone synthesis via StAR, and by increasing reverse cholesterol transport mediated by the induction of ABCA1 and APOA1. The heterodimer non-edited LVP1 induces lipolysis in rat adipocytes. Induction of lipolysis by LVP1 appears to be mediated through the beta-2 adrenergic receptor pathway (ADRB2). Its function is as follows. The monomer edited version, similar to alpha-toxins, may modulate voltage-gated sodium channels (Nav) and may block voltage-gated potassium channels (Kv). The chain is Lipolysis-activating peptide 1-beta chain from Lychas mucronatus (Chinese swimming scorpion).